The primary structure comprises 431 residues: Septin-11 (431 aa).

At Ala-2 the chain carries N-acetylalanine. Phosphoserine is present on Ser-9. The Septin-type G domain occupies 38 to 304; sequence QGFCFNILCV…ELYRRCKLEE (267 aa). Positions 48–55 are G1 motif; that stretch reads GETGIGKS. GTP-binding positions include 48–55, Gly-103, 184–192, Gly-238, and Arg-253; these read GETGIGKS and KADTIAKNE. The interval 100-103 is G3 motif; sequence DTVG. The interval 183 to 186 is G4 motif; that stretch reads AKAD. Residues 320–413 are a coiled coil; sequence QETYEAKRNE…LLQSQAQQSG (94 aa). The tract at residues 400 to 431 is disordered; the sequence is AAAQLLQSQAQQSGAQQTKKDKDKKNPWLCTE. The span at 401–416 shows a compositional bias: low complexity; the sequence is AAQLLQSQAQQSGAQQ.

It belongs to the TRAFAC class TrmE-Era-EngA-EngB-Septin-like GTPase superfamily. Septin GTPase family. As to quaternary structure, septins polymerize into heterooligomeric protein complexes that form filaments, and can associate with cellular membranes, actin filaments and microtubules. Forms homooligomers. GTPase activity is required for filament formation. Interacts with SEPTIN7, SEPTIN9 and SEPTIN12. Expressed in the cerebral cortex (at protein level).

The protein localises to the cytoplasm. The protein resides in the cytoskeleton. It is found in the synapse. Its subcellular location is the cell projection. It localises to the dendritic spine. The protein localises to the axon. Filament-forming cytoskeletal GTPase. May play a role in cytokinesis (Potential). May play a role in the cytoarchitecture of neurons, including dendritic arborization and dendritic spines, and in GABAergic synaptic connectivity. This chain is Septin-11, found in Mus musculus (Mouse).